A 79-amino-acid polypeptide reads, in one-letter code: Ferredoxin (79 aa).

2 consecutive 4Fe-4S ferredoxin-type domains span residues 2–30 and 31–60; these read PHVI…YDGG and DQFY…PEED. 2 residues coordinate [3Fe-4S] cluster: Cys-9 and Cys-17. The [4Fe-4S] cluster site is built by Cys-21, Cys-40, Cys-43, and Cys-46. Cys-50 provides a ligand contact to [3Fe-4S] cluster.

[4Fe-4S] cluster serves as cofactor. Requires [3Fe-4S] cluster as cofactor.

In terms of biological role, ferredoxins are iron-sulfur proteins that transfer electrons in a wide variety of metabolic reactions. The sequence is that of Ferredoxin from Thermus thermophilus (strain ATCC 27634 / DSM 579 / HB8).